We begin with the raw amino-acid sequence, 137 residues long: Small ribosomal subunit protein bS6 (137 aa).

A disordered region spans residues 96-137 (ITEASPMAKAKDERDTRRSSEERAPRAEATEEVKESAENTAE). Over residues 104–137 (KAKDERDTRRSSEERAPRAEATEEVKESAENTAE) the composition is skewed to basic and acidic residues.

It belongs to the bacterial ribosomal protein bS6 family.

Functionally, binds together with bS18 to 16S ribosomal RNA. This is Small ribosomal subunit protein bS6 from Shewanella piezotolerans (strain WP3 / JCM 13877).